Consider the following 121-residue polypeptide: MARIAGVDIPNDKRVVISLTYVYGIGLATSKKILAAAGISEDVRVKDLTSDQEDAIRREIDSIKVEGDLRREVNLNIKRLMEIGSYRGIRHRRGLPVRGQNTKNNARTRKGKATAIAGKKK.

The disordered stretch occupies residues 93-121 (RGLPVRGQNTKNNARTRKGKATAIAGKKK). Positions 106–121 (ARTRKGKATAIAGKKK) are enriched in basic residues.

It belongs to the universal ribosomal protein uS13 family. As to quaternary structure, part of the 30S ribosomal subunit. Forms a loose heterodimer with protein S19. Forms two bridges to the 50S subunit in the 70S ribosome.

Its function is as follows. Located at the top of the head of the 30S subunit, it contacts several helices of the 16S rRNA. In the 70S ribosome it contacts the 23S rRNA (bridge B1a) and protein L5 of the 50S subunit (bridge B1b), connecting the 2 subunits; these bridges are implicated in subunit movement. Contacts the tRNAs in the A and P-sites. The polypeptide is Small ribosomal subunit protein uS13 (Streptococcus uberis (strain ATCC BAA-854 / 0140J)).